The chain runs to 242 residues: Fibrinolytic enzyme, isozyme C (242 aa).

A Peptidase S1 domain is found at 1 to 242 (VIGGTNASPG…YLGWIGDNSR (242 aa)). A disulfide bond links cysteine 29 and cysteine 45. Catalysis depends on charge relay system residues histidine 44 and aspartate 93. 3 disulfide bridges follow: cysteine 127/cysteine 197, cysteine 158/cysteine 176, and cysteine 187/cysteine 219. The active-site Charge relay system is serine 191.

The protein belongs to the peptidase S1 family.

This chain is Fibrinolytic enzyme, isozyme C, found in Lumbricus rubellus (Humus earthworm).